A 203-amino-acid chain; its full sequence is Histidine biosynthesis bifunctional protein HisIE (203 aa).

Residues 1–114 (MLTEQQRREL…FGNTAHQWLF (114 aa)) form a phosphoribosyl-AMP cyclohydrolase region. The tract at residues 115–203 (LYQLEQLLAE…VIENLHKRHQ (89 aa)) is phosphoribosyl-ATP pyrophosphohydrolase.

This sequence in the N-terminal section; belongs to the PRA-CH family. The protein in the C-terminal section; belongs to the PRA-PH family.

The protein resides in the cytoplasm. It carries out the reaction 1-(5-phospho-beta-D-ribosyl)-ATP + H2O = 1-(5-phospho-beta-D-ribosyl)-5'-AMP + diphosphate + H(+). The catalysed reaction is 1-(5-phospho-beta-D-ribosyl)-5'-AMP + H2O = 1-(5-phospho-beta-D-ribosyl)-5-[(5-phospho-beta-D-ribosylamino)methylideneamino]imidazole-4-carboxamide. The protein operates within amino-acid biosynthesis; L-histidine biosynthesis; L-histidine from 5-phospho-alpha-D-ribose 1-diphosphate: step 2/9. It functions in the pathway amino-acid biosynthesis; L-histidine biosynthesis; L-histidine from 5-phospho-alpha-D-ribose 1-diphosphate: step 3/9. The protein is Histidine biosynthesis bifunctional protein HisIE (hisI) of Shigella flexneri.